The chain runs to 219 residues: tRNA (guanine-N(7)-)-methyltransferase (219 aa).

4 residues coordinate S-adenosyl-L-methionine: Glu43, Asp68, Glu101, and Asn124. The substrate site is built by Lys128 and Asp160.

The protein belongs to the class I-like SAM-binding methyltransferase superfamily. TrmB family.

The enzyme catalyses guanosine(46) in tRNA + S-adenosyl-L-methionine = N(7)-methylguanosine(46) in tRNA + S-adenosyl-L-homocysteine. It participates in tRNA modification; N(7)-methylguanine-tRNA biosynthesis. Its function is as follows. Catalyzes the formation of N(7)-methylguanine at position 46 (m7G46) in tRNA. This is tRNA (guanine-N(7)-)-methyltransferase from Clostridium beijerinckii (strain ATCC 51743 / NCIMB 8052) (Clostridium acetobutylicum).